A 330-amino-acid polypeptide reads, in one-letter code: MSNYFSMEAFDYDDIQLVPNKCIIKSRKEADTSVKFGSRTFKIPVVPANMESVIDDDLAIWLAENGYYYVMHRFHPEKRANFIKMMHDKGLFASISVGIKDSEYDFIDYLAKEKIIPEYITIDVAHGHSDYVIKMIKYIKDKLPDTFLTAGNIATPEAVRELENAGADATKVGVGPGRACITKLKTGFGTGGWQLAALRMCSKAARKPLIADGGIRHNGDIAKSVRFGASMVMIGSLFAGHEESPGNLITIDGKRYKQYWGSASEVQKGAYRNVEGKQMLVPYRGSIKDTLREMQEDLQSSISYAGGKDLSAIRVVDYVIVKSSIFDGDK.

Cys-180 serves as the catalytic Thioimidate intermediate. Residue 209–232 (LIADGGIRHNGDIAKSVRFGASMV) coordinates NADP(+).

It belongs to the IMPDH/GMPR family. GuaC type 2 subfamily.

It carries out the reaction IMP + NH4(+) + NADP(+) = GMP + NADPH + 2 H(+). Catalyzes the irreversible NADPH-dependent deamination of GMP to IMP. It functions in the conversion of nucleobase, nucleoside and nucleotide derivatives of G to A nucleotides, and in maintaining the intracellular balance of A and G nucleotides. This Lactobacillus gasseri (strain ATCC 33323 / DSM 20243 / BCRC 14619 / CIP 102991 / JCM 1131 / KCTC 3163 / NCIMB 11718 / NCTC 13722 / AM63) protein is GMP reductase.